A 301-amino-acid polypeptide reads, in one-letter code: MENLLSVKDLSKQQILDLLALAKAVKANPAEYSQALAGKSIVTIYEKPSLRTRVTFDIGIHKLGGHAVYLDAQNGAIGERETVKDFAANISRWADAIVARVVSHKTLEGLVEHGSVPVVNSLCDLYHPCQALADFLTISEHYEDVSKVKLAYVGEGNNVTHSLMLTGAILGAEVTAVCPRGSSPDAQIVKQAMALAEISGGKINVTDNLDAIVDYDVIYGDTWVSMGDDTPLAQVKEKYMPYQINKALLMRTGIKHVLHCQPAHRELEITSEVMDGEHSLIFDQAENRMHAQNAVLLTLLK.

Carbamoyl phosphate is bound by residues R100 and 127–130 (HPCQ). L-ornithine contacts are provided by residues N158, D221, and 225 to 226 (SM). 2 residues coordinate carbamoyl phosphate: C260 and R288.

This sequence belongs to the aspartate/ornithine carbamoyltransferase superfamily. OTCase family.

It localises to the cytoplasm. The catalysed reaction is carbamoyl phosphate + L-ornithine = L-citrulline + phosphate + H(+). It functions in the pathway amino-acid biosynthesis; L-arginine biosynthesis; L-arginine from L-ornithine and carbamoyl phosphate: step 1/3. Its function is as follows. Reversibly catalyzes the transfer of the carbamoyl group from carbamoyl phosphate (CP) to the N(epsilon) atom of ornithine (ORN) to produce L-citrulline. In Vibrio sp. (strain 2693), this protein is Ornithine carbamoyltransferase (argF).